Reading from the N-terminus, the 65-residue chain is MKTSGTVYVFLLLLAFGIFTDISSACSEQMDDEDSYEVEKRGNACIEVCLQHTGNPAECDKACDK.

The signal sequence occupies residues 1-26 (MKTSGTVYVFLLLLAFGIFTDISSAC). A propeptide spanning residues 27 to 39 (SEQMDDEDSYEVE) is cleaved from the precursor. 2 disulfides stabilise this stretch: C45–C63 and C49–C59.

Belongs to the short scorpion toxin superfamily. Potassium channel inhibitor kappa-KTx family. Kappa-KTx 2 subfamily. As to expression, expressed by the venom gland.

It is found in the secreted. Its function is as follows. Weakly inhibits the Kv7.1/KCNQ1 channel (10 uM of the toxin inhibits currents by 17.8%). The protein is Potassium channel toxin kappa-KTx 2.7 of Heterometrus petersii (Asian forest scorpion).